The following is a 78-amino-acid chain: ATP synthase subunit c (78 aa).

Transmembrane regions (helical) follow at residues 12 to 32 (IGAG…GHVV) and 54 to 74 (FIGI…ALLL).

This sequence belongs to the ATPase C chain family. F-type ATPases have 2 components, F(1) - the catalytic core - and F(0) - the membrane proton channel. F(1) has five subunits: alpha(3), beta(3), gamma(1), delta(1), epsilon(1). F(0) has four main subunits: a(1), b(1), b'(1) and c(10-14). The alpha and beta chains form an alternating ring which encloses part of the gamma chain. F(1) is attached to F(0) by a central stalk formed by the gamma and epsilon chains, while a peripheral stalk is formed by the delta, b and b' chains.

It localises to the cellular chromatophore membrane. F(1)F(0) ATP synthase produces ATP from ADP in the presence of a proton or sodium gradient. F-type ATPases consist of two structural domains, F(1) containing the extramembraneous catalytic core and F(0) containing the membrane proton channel, linked together by a central stalk and a peripheral stalk. During catalysis, ATP synthesis in the catalytic domain of F(1) is coupled via a rotary mechanism of the central stalk subunits to proton translocation. In terms of biological role, key component of the F(0) channel; it plays a direct role in translocation across the membrane. A homomeric c-ring of between 10-14 subunits forms the central stalk rotor element with the F(1) delta and epsilon subunits. The chain is ATP synthase subunit c from Rhodobacter capsulatus (Rhodopseudomonas capsulata).